Here is a 252-residue protein sequence, read N- to C-terminus: Homeobox protein EMX2 (252 aa).

A DNA-binding region (homeobox) is located at residues 154–213; sequence PKRIRTAFSPSQLLRLEHAFEKNHYVVGAERKQLAHSLSLTETQVKVWFQNRRTKFKRQK. The segment at 212 to 252 is disordered; it reads QKLEEEGSDSQQKKKGTHHINRWRIATKQASPEEIDVTSDD. Positions 224 to 233 are enriched in basic residues; the sequence is KKKGTHHINR.

It belongs to the EMX homeobox family. In terms of assembly, interacts with translation initiation factor EIF4E. In terms of tissue distribution, cerebral cortex.

The protein resides in the nucleus. The protein localises to the cell projection. It is found in the axon. Functionally, transcription factor, which in cooperation with EMX1, acts to generate the boundary between the roof and archipallium in the developing brain. May function in combination with OTX1/2 to specify cell fates in the developing central nervous system. In the inner ear, it controls the distribution of GPR156 at hair cell boundaries, and regulates the organization of stereociliary bundles in opposite orientations across the line of polarity reversal (LPR). The chain is Homeobox protein EMX2 (EMX2) from Homo sapiens (Human).